A 394-amino-acid chain; its full sequence is Elongation factor Tu (394 aa).

One can recognise a tr-type G domain in the interval R10–K204. A G1 region spans residues G19 to T26. G19–T26 contributes to the GTP binding site. T26 contacts Mg(2+). The segment at G60–N64 is G2. Residues D81–G84 are G3. Residues D81–H85 and N136–D139 contribute to the GTP site. Residues N136–D139 form a G4 region. The G5 stretch occupies residues S174 to L176.

The protein belongs to the TRAFAC class translation factor GTPase superfamily. Classic translation factor GTPase family. EF-Tu/EF-1A subfamily. As to quaternary structure, monomer.

Its subcellular location is the cytoplasm. It catalyses the reaction GTP + H2O = GDP + phosphate + H(+). Functionally, GTP hydrolase that promotes the GTP-dependent binding of aminoacyl-tRNA to the A-site of ribosomes during protein biosynthesis. This Blochmanniella floridana protein is Elongation factor Tu.